Here is a 112-residue protein sequence, read N- to C-terminus: Histone H2B (112 aa).

Positions 1–24 (MATPKSSSANRKKGGKKSHRKPKR) are disordered. Residues 10-24 (NRKKGGKKSHRKPKR) are compositionally biased toward basic residues.

The protein belongs to the histone H2B family. In terms of assembly, the nucleosome is a histone octamer containing two molecules each of H2A, H2B, H3 and H4 assembled in one H3-H4 heterotetramer and two H2A-H2B heterodimers. The octamer wraps approximately 147 bp of DNA.

The protein localises to the nucleus. Its subcellular location is the chromosome. Its function is as follows. Core component of nucleosome. Nucleosomes wrap and compact DNA into chromatin, limiting DNA accessibility to the cellular machineries which require DNA as a template. Histones thereby play a central role in transcription regulation, DNA repair, DNA replication and chromosomal stability. DNA accessibility is regulated via a complex set of post-translational modifications of histones, also called histone code, and nucleosome remodeling. In Trypanosoma cruzi, this protein is Histone H2B.